We begin with the raw amino-acid sequence, 440 residues long: Tyrosine--tRNA ligase (440 aa).

Tyr-46 contacts L-tyrosine. The 'HIGH' region signature appears at 51 to 60 (PTAASLHIGN). Positions 181 and 185 each coordinate L-tyrosine. The 'KMSKS' region signature appears at 241–245 (KFGKS). ATP is bound at residue Lys-244. The region spanning 373-439 (DRVIDAAQAA…GKKALGAVEN (67 aa)) is the S4 RNA-binding domain.

It belongs to the class-I aminoacyl-tRNA synthetase family. TyrS type 1 subfamily. Homodimer.

Its subcellular location is the cytoplasm. The enzyme catalyses tRNA(Tyr) + L-tyrosine + ATP = L-tyrosyl-tRNA(Tyr) + AMP + diphosphate + H(+). Functionally, catalyzes the attachment of tyrosine to tRNA(Tyr) in a two-step reaction: tyrosine is first activated by ATP to form Tyr-AMP and then transferred to the acceptor end of tRNA(Tyr). In Bifidobacterium longum subsp. infantis (strain ATCC 15697 / DSM 20088 / JCM 1222 / NCTC 11817 / S12), this protein is Tyrosine--tRNA ligase.